The primary structure comprises 795 residues: Probable diacylglycerol kinase 3 (795 aa).

2 consecutive EF-hand domains span residues 170-205 (TPEN…MMNV) and 215-250 (ELEQ…NIPL). Residues Asp183, Asp185, Asn187, Glu194, Asp228, Asp230, Asp232, and Glu239 each contribute to the Ca(2+) site. Phorbol-ester/DAG-type zinc fingers lie at residues 265-316 (SHVW…ATNC) and 329-375 (YHHW…AQEC). The 136-residue stretch at 423–558 (NDCRPLLVLV…MDRWQIKIEI (136 aa)) folds into the DAGKc domain.

The protein belongs to the eukaryotic diacylglycerol kinase family. As to quaternary structure, monomer.

The catalysed reaction is a 1,2-diacyl-sn-glycerol + ATP = a 1,2-diacyl-sn-glycero-3-phosphate + ADP + H(+). Functionally, involved in AFD-neuron mediated thermotaxis. Regulates behavior to environmental temperature. Thought to have a role in olfactory adaptation by affecting diacylglycerol levels. In Caenorhabditis elegans, this protein is Probable diacylglycerol kinase 3 (dgk-3).